A 186-amino-acid polypeptide reads, in one-letter code: Putative 3-methyladenine DNA glycosylase (186 aa).

The protein belongs to the DNA glycosylase MPG family.

This chain is Putative 3-methyladenine DNA glycosylase, found in Borrelia garinii subsp. bavariensis (strain ATCC BAA-2496 / DSM 23469 / PBi) (Borreliella bavariensis).